A 312-amino-acid chain; its full sequence is Acetaldehyde dehydrogenase (312 aa).

Serine 12 to valine 15 serves as a coordination point for NAD(+). Catalysis depends on cysteine 132, which acts as the Acyl-thioester intermediate. NAD(+) is bound by residues serine 163–asparagine 171 and asparagine 290.

It belongs to the acetaldehyde dehydrogenase family.

It catalyses the reaction acetaldehyde + NAD(+) + CoA = acetyl-CoA + NADH + H(+). In Pseudomonas putida (Arthrobacter siderocapsulatus), this protein is Acetaldehyde dehydrogenase (cbzQ).